A 29-amino-acid polypeptide reads, in one-letter code: Toxin II.9 (29 aa).

The region spanning 2 to 29 (KDGYLVNKYTGCKVNCYKLGENKFCNRE) is the LCN-type CS-alpha/beta domain.

The protein belongs to the long (4 C-C) scorpion toxin superfamily. Sodium channel inhibitor family. Beta subfamily. In terms of tissue distribution, expressed by the venom gland.

It localises to the secreted. Functionally, binds to sodium channels (Nav) and shift the voltage of activation toward more negative potentials. This toxin is active on crustaceans. In Centruroides limpidus (Mexican scorpion), this protein is Toxin II.9.